The chain runs to 790 residues: MKVSKDKSKKGVKSKPKTSRKPLSLKQKLQRESKIVKVDNLNWKAVDIPDNLDDYQGFYGLEEIDGVDVKVTGGNVEFVVKDNSKVKDSDNEEDDDDVHDDDDNQDDGDDDQDDDDVDIEDDEDEIIEGDNEDDFKGFDDDNAINEDDQMDIESAKTEKKSKKEVKPKNEKVAKKDSILESAFKNVDLTLPDDNEVNLPYWDDLSLSSFTLNGLSALEYEKPTAIQKRTIPLAIEGKDVIGKAITGSGKTLAYGIPILERHLQKMAKANQSKKVINPPTGIIFAPTRELAHQVVDHLNRIAKFTPLSQHGIVSITGGLSIQKQERLLSHGPGIVVATPGRFLELLQKDMALVQRLSCTDIVVLDEADRLLQDGHFDEFVKILELFGKHRPRDNKELEWKWQTLVFSATFSRDLFGKLDKHLKSNKNKEEMGSSLIDNDEILQLLNDKLKFKDSKPTLVDANPKEMVAGQITEALVECGPTERDLYLYYFLLLYPGSTLVFANSIDSVKRLAPFLNNLKVPTFSIHSSMIQKQRLRTLERFKEASSKNSTAVLIASDVAARGLDIPNIDHVAHYHLPRSADVYIHRSGRTGRAGKEGVSIMFCSPQESSGPLRKLRKLVANNTKKRTRLNVHNDVKLLPLEMDLVSQIKPRVTLASKLADAERSSSSTRKEDNWVHEAAEELGIDNLSDIDNFEDDFIKRQRKRKENKALTKDEARSLRLELNDLLSKQIRKNSRRSYLTSGLQNLAHQMVTGNTHKDVLGHASVNALDDLRTKKAIKKKQIKTKKVKDKK.

2 disordered regions span residues 1–29 (MKVSKDKSKKGVKSKPKTSRKPLSLKQKL) and 80–149 (VKDN…EDDQ). A compositionally biased stretch (basic residues) spans 7-20 (KSKKGVKSKPKTSR). Basic and acidic residues predominate over residues 80–89 (VKDNSKVKDS). Acidic residues-rich tracts occupy residues 90–133 (DNEE…DNED) and 140–149 (DDNAINEDDQ). The Q motif motif lies at 199–227 (PYWDDLSLSSFTLNGLSALEYEKPTAIQK). The Helicase ATP-binding domain occupies 230-427 (IPLAIEGKDV…DKHLKSNKNK (198 aa)). 243-250 (AITGSGKT) serves as a coordination point for ATP. The DEAD box signature appears at 364-367 (DEAD). Residues 483 to 642 (DLYLYYFLLL…DVKLLPLEMD (160 aa)) enclose the Helicase C-terminal domain.

It belongs to the DEAD box helicase family. DDX24/MAK5 subfamily.

Its subcellular location is the nucleus. It is found in the nucleolus. The enzyme catalyses ATP + H2O = ADP + phosphate + H(+). Its function is as follows. ATP-binding RNA helicase involved in the biogenesis of 60S ribosomal subunits and is required for the normal formation of 25S and 5.8S rRNAs. This is ATP-dependent RNA helicase MAK5 (MAK5) from Debaryomyces hansenii (strain ATCC 36239 / CBS 767 / BCRC 21394 / JCM 1990 / NBRC 0083 / IGC 2968) (Yeast).